Reading from the N-terminus, the 500-residue chain is MVLWGLLGALLMVMVGWLCLPGLLRQRRPQEPPLDKGSIPWLGHAMTFRKNMLEFLKHMRSKHGDVFTVQLGGQYFTFVMDPVSFGPILKDGQRKLDFVEYAKGLVLKVFGYQSIEGDHRMIHLASTKHLMGHGLEELNKAMLDSLSLVMLGPEGRSPDASRWHEDGLFHFCYGVMFKAGYLSLFGHTSDKRQDLLQAEEIFIKFRRFDLLFPRFVYSLLGPREWREVGRLQQLFHELLSVKHNPEKDGMSNWIGHMLQYLSEQGVAPAMQDKFNFMMLWASQGNTGPASFWALIYLLKHPEAMRAVKEEATRVLGEPRLEAKQSFTVQLSALQHIPVLDSVMEETLRLGAAPTLYRVVQKDILLKMASGQECLLRQGDIVTLFPYLSVHMDPDIHPEPTTFKYDRFLNPNGSRKVDFYKAGQKIHHYTMPWGSGVSICPGRFFALSEMKLFVLLMVQYFDLELVDPNTPVPPIDPRRWGFGTMQPTHDVRIRYRLKPLE.

The chain crosses the membrane as a helical span at residues 2–21 (VLWGLLGALLMVMVGWLCLP). The residue at position 325 (Ser325) is a Phosphoserine. Cys439 serves as a coordination point for heme.

It belongs to the cytochrome P450 family. Heme is required as a cofactor. In terms of tissue distribution, liver (at protein level).

The protein resides in the endoplasmic reticulum membrane. It localises to the microsome membrane. It carries out the reaction 7alpha-hydroxycholest-4-en-3-one + reduced [NADPH--hemoprotein reductase] + O2 = 7alpha,12alpha-dihydroxycholest-4-en-3-one + oxidized [NADPH--hemoprotein reductase] + H2O + H(+). It catalyses the reaction 5beta-cholestane-3alpha,7alpha-diol + reduced [NADPH--hemoprotein reductase] + O2 = 5beta-cholestane-3alpha,7alpha,12alpha-triol + oxidized [NADPH--hemoprotein reductase] + H2O + H(+). The enzyme catalyses chenodeoxycholate + reduced [NADPH--hemoprotein reductase] + O2 = cholate + oxidized [NADPH--hemoprotein reductase] + H2O + H(+). Its pathway is lipid metabolism; bile acid biosynthesis. Its activity is regulated as follows. Up-regulated upon treatment with streptozotocin. Its function is as follows. A cytochrome P450 monooxygenase involved in primary bile acid biosynthesis. Catalyzes the 12alpha-hydroxylation of 7alpha-hydroxy-4-cholesten-3-one, an intermediate metabolite in cholic acid biosynthesis. Controls biliary balance of cholic acid and chenodeoxycholic acid, ultimately regulating the intestinal absorption of dietary lipids. Mechanistically, uses molecular oxygen inserting one oxygen atom into a substrate, and reducing the second into a water molecule, with two electrons provided by NADPH via cytochrome P450 reductase (CPR; NADPH--hemoprotein reductase). In Oryctolagus cuniculus (Rabbit), this protein is 7-alpha-hydroxycholest-4-en-3-one 12-alpha-hydroxylase (CYP8B1).